The sequence spans 156 residues: MSTVKTIAGQLDAKGLKVAVVATRFNDFIVDRLVGGALDYLERHGLDMENVTMVRIPGAFEMPLVCQKLAASGKYDGILALGAVIRGGTPHFDYVCAEASKGIAQAMLQHSMPVGFGLLTCDNIEQAIERAGSKAGNKGVEAAAAMLETIRVMEQL.

5-amino-6-(D-ribitylamino)uracil contacts are provided by residues Phe25, 59–61 (AFE), and 83–85 (AVI). Position 88–89 (88–89 (GT)) interacts with (2S)-2-hydroxy-3-oxobutyl phosphate. The active-site Proton donor is His91. Position 116 (Phe116) interacts with 5-amino-6-(D-ribitylamino)uracil. Residue Arg130 coordinates (2S)-2-hydroxy-3-oxobutyl phosphate.

The protein belongs to the DMRL synthase family.

The enzyme catalyses (2S)-2-hydroxy-3-oxobutyl phosphate + 5-amino-6-(D-ribitylamino)uracil = 6,7-dimethyl-8-(1-D-ribityl)lumazine + phosphate + 2 H2O + H(+). It functions in the pathway cofactor biosynthesis; riboflavin biosynthesis; riboflavin from 2-hydroxy-3-oxobutyl phosphate and 5-amino-6-(D-ribitylamino)uracil: step 1/2. Catalyzes the formation of 6,7-dimethyl-8-ribityllumazine by condensation of 5-amino-6-(D-ribitylamino)uracil with 3,4-dihydroxy-2-butanone 4-phosphate. This is the penultimate step in the biosynthesis of riboflavin. The polypeptide is 6,7-dimethyl-8-ribityllumazine synthase (Desulfovibrio desulfuricans (strain ATCC 27774 / DSM 6949 / MB)).